Reading from the N-terminus, the 360-residue chain is MKNIFLHSLILENYRNFKNLELKIDNTPIILIGENGSGKTNILEAISLFYPGRGLRSAKLADICKTSEDHCSIKALLQSKLGLAEFTTQFKLSSNRRITEYNESKIANNELSKFTSMVWLTPQMEGIFTSGKVERRKFLDRIVYNFDPKHAELVGKYEYYMHERNKILAEEIQDDNWLKIIEEKMADISNHIAVNRLKTLEFMQQTINNLENEFPKADLSIDGIVEQKILDGEENIVSVITAELYKTRNKDKLIGRTSFGVHKSDFLVKHKKKNILAKLCSTGEQKAILIAIILAEMNYAIKLTKIAPVLLLDEVFVHLDDKRRDYLTEFFTYLNLQLWITTTNLESIENFASKAQLIKL.

33–40 lines the ATP pocket; the sequence is GENGSGKT.

Belongs to the RecF family.

It localises to the cytoplasm. Functionally, the RecF protein is involved in DNA metabolism; it is required for DNA replication and normal SOS inducibility. RecF binds preferentially to single-stranded, linear DNA. It also seems to bind ATP. This chain is DNA replication and repair protein RecF, found in Rickettsia canadensis (strain McKiel).